Reading from the N-terminus, the 1162-residue chain is MLEGRIVTVSSRTESPLAAPGVPGAPRRLSFARIREPLAVPGLLDIQTESFGWLIGAPDWCARAAARGTEPVAGLAEVLAEISPIEDFAGTMSLTLSDPRFEEVKASVEECKDKDLTYAAPWFVTAEFVNNNTGEIKSQTVFMGDFPMMTAHGTFVVNGTERVVVSQLVRSPGVYFDHAIDKGSEKDVHSARVIPSRGAWLEFDVDKRDTLGVRIDRKRRQPVTVLLKALGWSAERIAERFGFAPLIMASLAKDNVAGTDDALLEIHRKLRPGEPPTKESAQNLLANLFFTEKRYDLARVGRYKIDKKLGLRAPGAPRVLTEDDIAATIEYLVRLHAGERTMIAPGGVEVPVEVDDIDHFGNRRVRTVGELIQNQIRVGLSRMERVVRERMTTQDVEAITPQSLMNIRPVVAAMKEFFGTSQLSQFMDQRNPLASLTNKRRLSALGPGGLSRERAGLEVRDVHYSHYGRMCPIETPEGPNIGLMGYLSVYARVNPFGFVETPYRRVVDGRVTDEVDYLTADEEDRHVVAQANEPLDAEGRFLAARIPVRRKNSEVELVDSAAVDYMDVSPRQMVSVATAMIPFLEHDDANRALMGANMQRQAVPLIRSEAPIVGTGMELRAAVDAGDVVVNEKAGVVEEVSADYVTVMADDGTRKSYRMRKFNRSNQGTCSNQRPIVDEGQRVEAGQVLADGPCTENGEMALGKNLLVAIMPWEGHNYEDAIILSQRLVEQDVLTSIHIEEHEIDARDTKLGAEEITRDIPNVSDEVLADLDERGIVRIGAEVRDGDILVGKVTPKGETELTPEERLLRAIFGEKAREVRDTSLKVPHGESGKVIGIRVFSREDDDDLPPGVNELVRVYVAQKRKIQDGDKLAGRHGNKGVIGKILPTEDMPFLPDGTPVDIILNTHGVPRRMNIGQILETHLGWIGKAGWKVEGNPEWAKDLPEEMWEAPADSNIATPVFDGAREEELTGLLGSTLPNRDGERMVDDNGKAVLFDGRSGEPFPYPVAVGYMYILKLHHLVDDKIHARSTGPYSMITQQPLGGKAQFGGQRFGEMECWAMQAYGAAYTLQELLTIKSDDVVGRVKVYEAIVKGDNIPEPGVPESFKVLLKELQALCLNVEVLSAGAAVELAHGVDDDHERTAANLGINLSRAESITETELSG.

It belongs to the RNA polymerase beta chain family. In terms of assembly, the RNAP catalytic core consists of 2 alpha, 1 beta, 1 beta' and 1 omega subunit. When a sigma factor is associated with the core the holoenzyme is formed, which can initiate transcription.

It carries out the reaction RNA(n) + a ribonucleoside 5'-triphosphate = RNA(n+1) + diphosphate. Its function is as follows. DNA-dependent RNA polymerase catalyzes the transcription of DNA into RNA using the four ribonucleoside triphosphates as substrates. The sequence is that of DNA-directed RNA polymerase subunit beta 1 from Nocardia farcinica (strain IFM 10152).